The chain runs to 158 residues: U4/U6.U5 small nuclear ribonucleoprotein 27 kDa protein (158 aa).

Residues 1-30 (MGRSRSRTPPRRERRRSRSSSRDRERRRRE) show a composition bias toward basic residues. The segment at 1–100 (MGRSRSRTPP…ISAEDMQGKT (100 aa)) is disordered. Residues 31-41 (RERSRSRDRDR) are compositionally biased toward basic and acidic residues. Basic residues predominate over residues 42-62 (RRSRSRSPHRRRSRSPRRHRS). The segment covering 69-86 (RQKDRRDDDRKDVKEKPA) has biased composition (basic and acidic residues).

Belongs to the SNUT3 family. As to quaternary structure, part of a tri-snRNP complex.

It localises to the nucleus. Functionally, may play a role in mRNA splicing. The chain is U4/U6.U5 small nuclear ribonucleoprotein 27 kDa protein (snrnp27) from Danio rerio (Zebrafish).